The primary structure comprises 369 residues: F-box protein UCC1 (369 aa).

The region spanning 8 to 45 (LMDLPLEIHLSLLEYVPNELRAVNKYFYVLHNHSYKEK) is the F-box domain.

Component of the SCF(UCC1) E3 ubiquitin-protein ligase complex composed of CDC53, SKP1, RBX1 and UCC1. Interacts with CIT2. In terms of processing, monoubiquitinated by UBC4.

Its pathway is protein modification; protein ubiquitination. In terms of biological role, substrate recognition component of the SKP1-CUL1-F-box protein E3 ubiquitin-protein ligase complex SCF(UCC1) which mediates the ubiquitination and subsequent proteasomal degradation of target proteins. The SCF(UCC1) complex acts as a metabolic switch for the glyoxylate cycle and regulates the level of CIT2 protein to maintain citrate homeostasis. The polypeptide is F-box protein UCC1 (UCC1) (Saccharomyces cerevisiae (strain ATCC 204508 / S288c) (Baker's yeast)).